Reading from the N-terminus, the 371-residue chain is Carlactonoate CLA methyltransferase (371 aa).

Position 21 (Tyr21) interacts with S-adenosyl-L-homocysteine. Gln28 provides a ligand contact to (11R)-carlactonoate. S-adenosyl-L-homocysteine contacts are provided by Cys62, Asn67, Asp101, Leu102, Ser141, and Phe142. Residues His162 and Trp163 each coordinate (11R)-carlactonoate. Mg(2+)-binding residues include Asn180, Asp266, Tyr268, and Asp269.

It belongs to the methyltransferase superfamily. Type-7 methyltransferase family. SABATH subfamily. As to quaternary structure, homodimer. Mg(2+) is required as a cofactor.

The catalysed reaction is (11R)-carlactonoate + S-adenosyl-L-methionine = (11R)-methyl carlactonoate + S-adenosyl-L-homocysteine. In terms of biological role, methyltransferase involved in the biosynthesis of strigolactone natural products, bioactive compounds promoting plant fitness and soil microbe interactions, but preventing shoot branching. Catalyzes the biosynthesis of (11R)-methyl carlactonoate (MeCLA) from (11R)-carlactonoate (CLA), downstream of MAX1; MeCLA is probably biologically active as a hormone regulating shoot branching and serves as a precursor of non-canonical strigolactones (SLs). The sequence is that of Carlactonoate CLA methyltransferase from Arabidopsis thaliana (Mouse-ear cress).